A 794-amino-acid polypeptide reads, in one-letter code: uncharacterized protein (794 aa).

The next 9 helical transmembrane spans lie at 34-54, 67-87, 99-119, 132-152, 257-277, 283-303, 315-335, 353-373, and 421-441; these read FSAS…VFAV, ITAA…AHLI, MLAD…AFAS, LFLF…ADVT, VGPS…AMGL, LAWI…MFQL, WSVN…VLVF, LGAL…ATLF, and WTGT…LMGV.

The protein localises to the cell membrane. This is an uncharacterized protein from Corynebacterium glutamicum (strain ATCC 13032 / DSM 20300 / JCM 1318 / BCRC 11384 / CCUG 27702 / LMG 3730 / NBRC 12168 / NCIMB 10025 / NRRL B-2784 / 534).